A 400-amino-acid polypeptide reads, in one-letter code: D-alanyl-D-alanine carboxypeptidase DacC (400 aa).

Residues 1–27 (MTQYSSLLRGLAAGSAFLFLFAPTAFA) form the signal peptide. Ser-66 serves as the catalytic Acyl-ester intermediate. The Proton acceptor role is filled by Lys-69. The active site involves Ser-132. Residue Lys-235 coordinates substrate. Residues 383-400 (VWDFVMMKFHQWFGSWFS) are required for inner membrane binding.

The protein belongs to the peptidase S11 family.

Its subcellular location is the cell inner membrane. The enzyme catalyses Preferential cleavage: (Ac)2-L-Lys-D-Ala-|-D-Ala. Also transpeptidation of peptidyl-alanyl moieties that are N-acyl substituents of D-alanine.. Its pathway is cell wall biogenesis; peptidoglycan biosynthesis. Its function is as follows. Removes C-terminal D-alanyl residues from sugar-peptide cell wall precursors. The protein is D-alanyl-D-alanine carboxypeptidase DacC (dacC) of Escherichia coli (strain K12).